The sequence spans 649 residues: Acetyl-coenzyme A synthetase (649 aa).

Residues 191–194 (RGGR), threonine 312, and asparagine 336 each bind CoA. ATP contacts are provided by residues 388–390 (GEP), 412–417 (DTWWQT), aspartate 501, and arginine 516. Serine 524 contributes to the CoA binding site. Arginine 527 is a binding site for ATP. Mg(2+) contacts are provided by valine 538, histidine 540, and valine 543. Arginine 585 contacts CoA. Residue lysine 610 is modified to N6-acetyllysine.

This sequence belongs to the ATP-dependent AMP-binding enzyme family. Mg(2+) is required as a cofactor. In terms of processing, acetylated. Deacetylation by the SIR2-homolog deacetylase activates the enzyme.

The enzyme catalyses acetate + ATP + CoA = acetyl-CoA + AMP + diphosphate. In terms of biological role, catalyzes the conversion of acetate into acetyl-CoA (AcCoA), an essential intermediate at the junction of anabolic and catabolic pathways. AcsA undergoes a two-step reaction. In the first half reaction, AcsA combines acetate with ATP to form acetyl-adenylate (AcAMP) intermediate. In the second half reaction, it can then transfer the acetyl group from AcAMP to the sulfhydryl group of CoA, forming the product AcCoA. The polypeptide is Acetyl-coenzyme A synthetase (Marinobacter nauticus (strain ATCC 700491 / DSM 11845 / VT8) (Marinobacter aquaeolei)).